Reading from the N-terminus, the 218-residue chain is Small ribosomal subunit protein uS3 (218 aa).

In terms of domain architecture, KH type-2 spans 38 to 106; that stretch reads IRKYIESKLA…RVHINIVEIK (69 aa).

It belongs to the universal ribosomal protein uS3 family. Part of the 30S ribosomal subunit. Forms a tight complex with proteins S10 and S14.

Binds the lower part of the 30S subunit head. Binds mRNA in the 70S ribosome, positioning it for translation. This is Small ribosomal subunit protein uS3 from Ligilactobacillus salivarius (strain UCC118) (Lactobacillus salivarius).